The following is a 553-amino-acid chain: Retrotransposon Gag-like protein 3 (553 aa).

Residues 2–43 (VEDLAASYVTLKLENEILQAQVKRLMEENAALQAQIPELQKS) adopt a coiled-coil conformation. Disordered regions lie at residues 38 to 274 (PELQ…PLDP) and 474 to 514 (SGGV…EAER). Positions 45–57 (AVKEHEPLRKPSE) are enriched in basic and acidic residues. Over residues 58–73 (AQEPPESPEFPAARES) the composition is skewed to low complexity. The span at 87–113 (EPTKIREPREPSAISELREPPEIKEPQ) shows a compositional bias: basic and acidic residues. The segment covering 118–127 (TNESGESSAI) has biased composition (polar residues). The span at 132-147 (GSPEIKEPHLPPKSKE) shows a compositional bias: basic and acidic residues. Residues 239-250 (QTVPEYQETSSQ) are compositionally biased toward polar residues. Positions 474–483 (SGGVDSSSSS) are enriched in low complexity. The span at 495-507 (TENQPVQATSNRP) shows a compositional bias: polar residues. The CCHC-type zinc finger occupies 523–537 (CLYCGHPGHFARDCP).

In terms of tissue distribution, expressed in embryonic myogenic progenitor cells, not expressed in adult and aged satellite cells.

The protein localises to the nucleus. Its function is as follows. May function as a transcriptional regulator. Plays a role in postnatal myogenesis, may be involved in the regulation of satellite cells self-renewal. The polypeptide is Retrotransposon Gag-like protein 3 (Mus musculus (Mouse)).